Reading from the N-terminus, the 704-residue chain is MQNSPTTEQTKNIVAERIQELRQLIAHNNRLYYENIPPRREIHDYEYDELFKELQELESRFPEFQSADSPTQIVGGSVSEGFKKVQHSVPMLSIENKPVTKMLSEVRSIIKELKDDAISIDIVAEPKIDGLSCSIRYEKHQLVRAATRGDGLEGEDITVNVHSISEIPKILPLDAPEVIEIRGEVYMSNSDFKQYTAQQNKIGEKPPENPRNAAAGSLRQLDPSVTASRPLRFFAYAWGEISNSFAKSQWDALQTLRGWGFKVCDDIRLLYSSDELNSYFEEMQERRSELDFTIDGIVYKLNSLSLQERVGQTNRAPRWAAAQKFPPEKRETLLQNITISVGRSGALTPVAELLPVRLLGTTVSNATLHNQDEVECKDFRIDDTIVVQRAGDVIPQVVSVVIEKRLSGSIPFVFPSACPVCGSKAVREPREAVWKCTGGLTCPAQSLERLKHFVSRDAFNIDGLGEKNIELFYNKGLLASPVDIFRLEEILSPPLLWQQKPSEFKPLQEWDGWGELSANNLFRAIRTKQKITLYRFIYALGIPKVGEVTAKILADNYVSLDNWQSSMLKAAERESECYQHLISIDGIGSVVADEIVSFFAEAHNIQVLDSLKNYLSVEDFTKPAIISSNISGKIVVFTGELEKRSRKAAKIEAEKFGAKVATDVSRKTDIVIAGTDPGSKLRKAQELGIKILSEDEWEHLINEK.

Residues 44–48, 93–94, and glutamate 125 contribute to the NAD(+) site; these read DYEYD and SI. Lysine 127 serves as the catalytic N6-AMP-lysine intermediate. Residues arginine 148, glutamate 184, lysine 300, and lysine 324 each coordinate NAD(+). Residues cysteine 418, cysteine 421, cysteine 436, and cysteine 442 each contribute to the Zn(2+) site. The BRCT domain occupies 625–704; the sequence is IISSNISGKI…DEWEHLINEK (80 aa).

This sequence belongs to the NAD-dependent DNA ligase family. LigA subfamily. It depends on Mg(2+) as a cofactor. Mn(2+) is required as a cofactor.

It carries out the reaction NAD(+) + (deoxyribonucleotide)n-3'-hydroxyl + 5'-phospho-(deoxyribonucleotide)m = (deoxyribonucleotide)n+m + AMP + beta-nicotinamide D-nucleotide.. DNA ligase that catalyzes the formation of phosphodiester linkages between 5'-phosphoryl and 3'-hydroxyl groups in double-stranded DNA using NAD as a coenzyme and as the energy source for the reaction. It is essential for DNA replication and repair of damaged DNA. This Pelobacter propionicus (strain DSM 2379 / NBRC 103807 / OttBd1) protein is DNA ligase.